A 147-amino-acid polypeptide reads, in one-letter code: Spermidine export protein MdtJ (147 aa).

The next 4 membrane-spanning stretches (helical) occupy residues 1–21 (MIYW…TLSM), 31–51 (TGHI…SLAV), 54–74 (VALG…ITIF), and 81–101 (ETLS…ILLV). Positions 105–117 (TRKPKQPNRHRGN) are enriched in basic residues. A disordered region spans residues 105–147 (TRKPKQPNRHRGNRPPSVQGLKTQTTGHHKGVAVESGEHHAAA).

Belongs to the drug/metabolite transporter (DMT) superfamily. Small multidrug resistance (SMR) (TC 2.A.7.1) family. MdtJ subfamily. Forms a complex with MdtI.

It is found in the cell inner membrane. In terms of biological role, catalyzes the excretion of spermidine. The sequence is that of Spermidine export protein MdtJ from Yersinia pseudotuberculosis serotype O:3 (strain YPIII).